A 208-amino-acid chain; its full sequence is MKLQVLDANGTSVKEISVNDAIWGIEPHQQAMFDAVIAQQASMRQGTHKTKTKTEVSGGGRKPWRQKGTGRARQGSIRAPQWKGGGIVFGPTPEKKYLKHVNKKVRKLAIKSAFSLKVQDKNIMIIDQFGIDKPSTKAMVKVLNNLKVNGEKLLIITTEGDEVNFKSSRNIEKVNIITSAGINIYDLLNANKLLVTEQAIKAIEEVYS.

A disordered region spans residues 42 to 77 (SMRQGTHKTKTKTEVSGGGRKPWRQKGTGRARQGSI).

This sequence belongs to the universal ribosomal protein uL4 family. As to quaternary structure, part of the 50S ribosomal subunit.

In terms of biological role, one of the primary rRNA binding proteins, this protein initially binds near the 5'-end of the 23S rRNA. It is important during the early stages of 50S assembly. It makes multiple contacts with different domains of the 23S rRNA in the assembled 50S subunit and ribosome. Functionally, forms part of the polypeptide exit tunnel. In Spiroplasma kunkelii, this protein is Large ribosomal subunit protein uL4.